We begin with the raw amino-acid sequence, 235 residues long: Protein GrpE (235 aa).

Composition is skewed to basic and acidic residues over residues 1-16 (MENKNQKHNNEFHEKN) and 24-35 (NNVKKENLHEDQ). Positions 1 to 51 (MENKNQKHNNEFHEKNQQSQKDNNNVKKENLHEDQSDLNDANFDDGGKKNK) are disordered.

This sequence belongs to the GrpE family. In terms of assembly, homodimer.

It localises to the cytoplasm. Its function is as follows. Participates actively in the response to hyperosmotic and heat shock by preventing the aggregation of stress-denatured proteins, in association with DnaK and GrpE. It is the nucleotide exchange factor for DnaK and may function as a thermosensor. Unfolded proteins bind initially to DnaJ; upon interaction with the DnaJ-bound protein, DnaK hydrolyzes its bound ATP, resulting in the formation of a stable complex. GrpE releases ADP from DnaK; ATP binding to DnaK triggers the release of the substrate protein, thus completing the reaction cycle. Several rounds of ATP-dependent interactions between DnaJ, DnaK and GrpE are required for fully efficient folding. The protein is Protein GrpE of Malacoplasma penetrans (strain HF-2) (Mycoplasma penetrans).